Here is a 156-residue protein sequence, read N- to C-terminus: Calglandulin (156 aa).

4 consecutive EF-hand domains span residues 8 to 43, 44 to 79, 82 to 117, and 118 to 153; these read EQIT…VGIN, PTKR…YHEK, NQDE…AGEP, and LNEQ…ESFK. Ca(2+) is bound by residues D131, D133, D135, T137, and E142.

The protein belongs to the calmodulin family. Calglandulin subfamily. As to expression, expressed by the venom gland.

It localises to the cytoplasm. May be involved in the cellular control mechanism of the secretion of toxins from the gland into the venom. The polypeptide is Calglandulin (Bothrops insularis (Golden lancehead)).